Here is a 1642-residue protein sequence, read N- to C-terminus: Mitochondrial 3' processome subunit 2 (1642 aa).

A mitochondrion-targeting transit peptide spans 1–27 (MGLPFLCHTRVCLFSNKIPFVLCGSRF). Disordered regions lie at residues 43–69 (ETLN…PQKK) and 745–772 (KGEK…LSGP). A compositionally biased stretch (polar residues) spans 49 to 65 (ELSSPSTSKEPSVGSDS).

As to quaternary structure, component of the mitochondrial 3' processome (MPsome) complex composed at least of terminal uridylyltransferase KRET1/TUT1, 3'-5' exonuclease DSS1, MPSS1, MPSS2 and MPSS3. Within the complex, interacts with DSS1.

It localises to the mitochondrion. Its function is as follows. As part of the mitochondrial 3' processome (MPsome), involved in the maturation of guided RNA (gRNA) precursors. The protein is Mitochondrial 3' processome subunit 2 of Trypanosoma brucei brucei.